A 301-amino-acid polypeptide reads, in one-letter code: Homoserine O-acetyltransferase (301 aa).

The active-site Acyl-thioester intermediate is the C142. K163 and S192 together coordinate substrate. Residue H235 is the Proton acceptor of the active site. E237 is a catalytic residue. Position 249 (R249) interacts with substrate.

Belongs to the MetA family.

The protein localises to the cytoplasm. The enzyme catalyses L-homoserine + acetyl-CoA = O-acetyl-L-homoserine + CoA. It functions in the pathway amino-acid biosynthesis; L-methionine biosynthesis via de novo pathway; O-acetyl-L-homoserine from L-homoserine: step 1/1. Its function is as follows. Transfers an acetyl group from acetyl-CoA to L-homoserine, forming acetyl-L-homoserine. This is Homoserine O-acetyltransferase from Bacillus cereus (strain AH187).